The following is a 369-amino-acid chain: uncharacterized protein (369 aa).

Residue lysine 184 is modified to N6-(pyridoxal phosphate)lysine.

The protein belongs to the class-V pyridoxal-phosphate-dependent aminotransferase family. Pyridoxal 5'-phosphate serves as cofactor.

This is an uncharacterized protein from Helicobacter pylori (strain J99 / ATCC 700824) (Campylobacter pylori J99).